The primary structure comprises 563 residues: Dihydroxy-acid dehydratase (563 aa).

C51 is a [2Fe-2S] cluster binding site. A Mg(2+)-binding site is contributed by D83. Residue C124 coordinates [2Fe-2S] cluster. D125 and K126 together coordinate Mg(2+). K126 carries the N6-carboxylysine modification. Residue C196 coordinates [2Fe-2S] cluster. Residue E448 participates in Mg(2+) binding. The active-site Proton acceptor is S474.

Belongs to the IlvD/Edd family. Homodimer. It depends on [2Fe-2S] cluster as a cofactor. The cofactor is Mg(2+).

It catalyses the reaction (2R)-2,3-dihydroxy-3-methylbutanoate = 3-methyl-2-oxobutanoate + H2O. The enzyme catalyses (2R,3R)-2,3-dihydroxy-3-methylpentanoate = (S)-3-methyl-2-oxopentanoate + H2O. Its pathway is amino-acid biosynthesis; L-isoleucine biosynthesis; L-isoleucine from 2-oxobutanoate: step 3/4. The protein operates within amino-acid biosynthesis; L-valine biosynthesis; L-valine from pyruvate: step 3/4. Functionally, functions in the biosynthesis of branched-chain amino acids. Catalyzes the dehydration of (2R,3R)-2,3-dihydroxy-3-methylpentanoate (2,3-dihydroxy-3-methylvalerate) into 2-oxo-3-methylpentanoate (2-oxo-3-methylvalerate) and of (2R)-2,3-dihydroxy-3-methylbutanoate (2,3-dihydroxyisovalerate) into 2-oxo-3-methylbutanoate (2-oxoisovalerate), the penultimate precursor to L-isoleucine and L-valine, respectively. The protein is Dihydroxy-acid dehydratase of Polynucleobacter necessarius subsp. necessarius (strain STIR1).